Here is a 159-residue protein sequence, read N- to C-terminus: UPF0262 protein RD1_1069 (159 aa).

It belongs to the UPF0262 family.

This is UPF0262 protein RD1_1069 from Roseobacter denitrificans (strain ATCC 33942 / OCh 114) (Erythrobacter sp. (strain OCh 114)).